The sequence spans 343 residues: Protein RecA (343 aa).

Residue 66-73 (GPESSGKT) participates in ATP binding.

This sequence belongs to the RecA family.

Its subcellular location is the cytoplasm. In terms of biological role, can catalyze the hydrolysis of ATP in the presence of single-stranded DNA, the ATP-dependent uptake of single-stranded DNA by duplex DNA, and the ATP-dependent hybridization of homologous single-stranded DNAs. It interacts with LexA causing its activation and leading to its autocatalytic cleavage. The protein is Protein RecA of Rickettsia conorii (strain ATCC VR-613 / Malish 7).